Reading from the N-terminus, the 71-residue chain is MKLTCVVIVAVLLLTACQLITADDSRGTQRHRALRSDTKLSMSTRCKGKGASCSRTMYNCCSGSCNRGKCG.

3 disulfides stabilise this stretch: cysteine 46–cysteine 61, cysteine 53–cysteine 65, and cysteine 60–cysteine 70. Cysteine 70 bears the Cysteine amide; in CnVIID mark.

Belongs to the conotoxin M superfamily. Expressed by the venom duct.

Its subcellular location is the secreted. Its function is as follows. Omega-conotoxins act at presynaptic membranes, they bind and block voltage-gated calcium channels (Cav). This Conus consors (Singed cone) protein is Omega-conotoxin-like CnVIIF.